The following is a 297-amino-acid chain: Guanylate kinase (297 aa).

The 180-residue stretch at 4–183 (GKMIIISGPS…AVAKITDVLH (180 aa)) folds into the Guanylate kinase-like domain. 11–18 (GPSGVGKG) lines the ATP pocket. Positions 204 to 297 (EQIVKEKYMY…EQKHYNNDEF (94 aa)) are unknown.

This sequence belongs to the guanylate kinase family.

It localises to the cytoplasm. It carries out the reaction GMP + ATP = GDP + ADP. Essential for recycling GMP and indirectly, cGMP. This chain is Guanylate kinase (gmk), found in Mycoplasma capricolum subsp. capricolum (strain California kid / ATCC 27343 / NCTC 10154).